The primary structure comprises 615 residues: NADH-quinone oxidoreductase subunit L (615 aa).

15 consecutive transmembrane segments (helical) span residues 1–21, 32–52, 79–99, 113–133, 136–156, 168–188, 247–267, 279–299, 327–347, 372–392, 410–430, 457–477, 491–511, 536–556, and 594–614; these read MNII…LSLI, IIGI…ITGF, LILD…GLLI, YSRF…LVLA, FLFM…LIGF, LKAF…MFLI, TPVS…YLIA, ILYL…FSAL, AWTA…LLFL, CPLL…FPLI, GYFN…IYTF, LLIL…LPLF, FLYE…AYHI, LNGW…YLFI, and YIST…CSFL.

This sequence belongs to the complex I subunit 5 family. In terms of assembly, composed of 13 different subunits. Subunits NuoA, H, J, K, L, M, N constitute the membrane sector of the complex.

It localises to the cell membrane. The enzyme catalyses a quinone + NADH + 5 H(+)(in) = a quinol + NAD(+) + 4 H(+)(out). Its function is as follows. NDH-1 shuttles electrons from NADH, via FMN and iron-sulfur (Fe-S) centers, to quinones in the respiratory chain. Couples the redox reaction to proton translocation (for every two electrons transferred, four hydrogen ions are translocated across the cytoplasmic membrane), and thus conserves the redox energy in a proton gradient. This chain is NADH-quinone oxidoreductase subunit L (nuoL), found in Buchnera aphidicola subsp. Schizaphis graminum (strain Sg).